Here is a 265-residue protein sequence, read N- to C-terminus: Flavin-dependent thymidylate synthase (265 aa).

The region spanning 11 to 224 (GFLKLIDFMG…PIAFNSFENH (214 aa)) is the ThyX domain. FAD-binding positions include Ser-56, 79–81 (RHR), and Glu-87. Position 76 to 79 (76 to 79 (QWMR)) interacts with dUMP. The ThyX motif motif lies at 79–89 (RHRTARINEVS). Residue Arg-155 coordinates dUMP. Residues 171–173 (DLN) and His-177 each bind FAD. Residue Arg-182 coordinates dUMP. Arg-182 functions as the Involved in ionization of N3 of dUMP, leading to its activation in the catalytic mechanism.

It belongs to the thymidylate synthase ThyX family. In terms of assembly, homotetramer. It depends on FAD as a cofactor.

The enzyme catalyses dUMP + (6R)-5,10-methylene-5,6,7,8-tetrahydrofolate + NADPH + H(+) = dTMP + (6S)-5,6,7,8-tetrahydrofolate + NADP(+). It functions in the pathway pyrimidine metabolism; dTTP biosynthesis. Functionally, catalyzes the reductive methylation of 2'-deoxyuridine-5'-monophosphate (dUMP) to 2'-deoxythymidine-5'-monophosphate (dTMP) while utilizing 5,10-methylenetetrahydrofolate (mTHF) as the methyl donor, and NADPH and FADH(2) as the reductant. The chain is Flavin-dependent thymidylate synthase from Borreliella burgdorferi (strain ATCC 35210 / DSM 4680 / CIP 102532 / B31) (Borrelia burgdorferi).